The sequence spans 183 residues: Putative ribosomal N-acetyltransferase YdaF (183 aa).

The region spanning 10 to 176 (ITIRLLEPKD…HDLVYYSLLK (167 aa)) is the N-acetyltransferase domain.

Belongs to the acetyltransferase family. Homohexamer, and homodimer.

Its function is as follows. Putative N-acetyltransferase. May act on ribosomal proteins (Potential). This Bacillus subtilis (strain 168) protein is Putative ribosomal N-acetyltransferase YdaF (ydaF).